We begin with the raw amino-acid sequence, 81 residues long: Small ribosomal subunit protein bS16 (81 aa).

Belongs to the bacterial ribosomal protein bS16 family.

This Clostridium botulinum (strain Eklund 17B / Type B) protein is Small ribosomal subunit protein bS16.